Consider the following 123-residue polypeptide: Large ribosomal subunit protein bL19 (123 aa).

Belongs to the bacterial ribosomal protein bL19 family.

This protein is located at the 30S-50S ribosomal subunit interface and may play a role in the structure and function of the aminoacyl-tRNA binding site. The protein is Large ribosomal subunit protein bL19 of Ureaplasma parvum serovar 3 (strain ATCC 27815 / 27 / NCTC 11736).